Reading from the N-terminus, the 143-residue chain is Large ribosomal subunit protein uL11 (143 aa).

It belongs to the universal ribosomal protein uL11 family. As to quaternary structure, part of the ribosomal stalk of the 50S ribosomal subunit. Interacts with L10 and the large rRNA to form the base of the stalk. L10 forms an elongated spine to which L12 dimers bind in a sequential fashion forming a multimeric L10(L12)X complex. Post-translationally, one or more lysine residues are methylated.

Functionally, forms part of the ribosomal stalk which helps the ribosome interact with GTP-bound translation factors. In Allorhizobium ampelinum (strain ATCC BAA-846 / DSM 112012 / S4) (Agrobacterium vitis (strain S4)), this protein is Large ribosomal subunit protein uL11.